We begin with the raw amino-acid sequence, 407 residues long: CCA-adding enzyme (407 aa).

Residues Gly32 and Arg35 each coordinate ATP. 2 residues coordinate CTP: Gly32 and Arg35. The Mg(2+) site is built by Asp45 and Asp47. Arg116, Asp159, Arg162, Arg165, and Arg168 together coordinate ATP. CTP-binding residues include Arg116, Asp159, Arg162, Arg165, and Arg168.

The protein belongs to the tRNA nucleotidyltransferase/poly(A) polymerase family. Bacterial CCA-adding enzyme type 3 subfamily. Homodimer. Mg(2+) serves as cofactor.

The enzyme catalyses a tRNA precursor + 2 CTP + ATP = a tRNA with a 3' CCA end + 3 diphosphate. It catalyses the reaction a tRNA with a 3' CCA end + 2 CTP + ATP = a tRNA with a 3' CCACCA end + 3 diphosphate. Its function is as follows. Catalyzes the addition and repair of the essential 3'-terminal CCA sequence in tRNAs without using a nucleic acid template. Adds these three nucleotides in the order of C, C, and A to the tRNA nucleotide-73, using CTP and ATP as substrates and producing inorganic pyrophosphate. tRNA 3'-terminal CCA addition is required both for tRNA processing and repair. Also involved in tRNA surveillance by mediating tandem CCA addition to generate a CCACCA at the 3' terminus of unstable tRNAs. While stable tRNAs receive only 3'-terminal CCA, unstable tRNAs are marked with CCACCA and rapidly degraded. This chain is CCA-adding enzyme, found in Lactiplantibacillus plantarum (strain ATCC BAA-793 / NCIMB 8826 / WCFS1) (Lactobacillus plantarum).